The sequence spans 264 residues: Glutamate racemase (264 aa).

Substrate contacts are provided by residues 10–11 (DS) and 42–43 (YG). The active-site Proton donor/acceptor is the cysteine 73. 74–75 (NT) is a substrate binding site. Cysteine 183 serves as the catalytic Proton donor/acceptor. A substrate-binding site is contributed by 184–185 (TH).

This sequence belongs to the aspartate/glutamate racemases family.

The enzyme catalyses L-glutamate = D-glutamate. It participates in cell wall biogenesis; peptidoglycan biosynthesis. Functionally, provides the (R)-glutamate required for cell wall biosynthesis. The polypeptide is Glutamate racemase (Streptococcus pyogenes serotype M2 (strain MGAS10270)).